The sequence spans 429 residues: Uracil permease (429 aa).

Residues M1–P13 are Cytoplasmic-facing. The chain crosses the membrane as a helical span at residues L14–V37. Residues L38 to I41 lie on the Periplasmic side of the membrane. A helical transmembrane segment spans residues N42–C61. The Cytoplasmic segment spans residues K62–K64. Residues I65–L81 form a discontinuously helical membrane-spanning segment. F73 provides a ligand contact to uracil. Residues L82–V89 lie on the Periplasmic side of the membrane. A helical transmembrane segment spans residues A90–K110. Residues A111–P122 are Cytoplasmic-facing. A helical transmembrane segment spans residues A123–A144. The Periplasmic portion of the chain corresponds to G145–D155. A helical membrane pass occupies residues S156–L171. The Cytoplasmic portion of the chain corresponds to G172 to G178. The helical transmembrane segment at F179–M199 threads the bilayer. The Periplasmic portion of the chain corresponds to G200–E224. A helical transmembrane segment spans residues W225–V248. Residue E241 coordinates uracil. Residues T249 to P261 are Cytoplasmic-facing. The helical transmembrane segment at G262–G281 threads the bilayer. A discontinuously helical membrane pass occupies residues S282 to T298. Uracil contacts are provided by G289 and E290. Residues R299 to Y301 are Cytoplasmic-facing. Residues S302 to V319 traverse the membrane as a helical segment. Over G320–P332 the chain is Periplasmic. Residues V333–I354 traverse the membrane as a helical segment. Over E355–N365 the chain is Cytoplasmic. Positions L366–G401 form an intramembrane region, discontinuously helical. The Cytoplasmic portion of the chain corresponds to L402–K429.

Belongs to the nucleobase:cation symporter-2 (NCS2) (TC 2.A.40) family.

The protein resides in the cell inner membrane. The catalysed reaction is uracil(in) + H(+)(in) = uracil(out) + H(+)(out). In terms of biological role, transport of uracil in the cell. The protein is Uracil permease (uraA) of Escherichia coli O157:H7.